A 474-amino-acid polypeptide reads, in one-letter code: Mitochondrial import inner membrane translocase subunit TIM44-1 (474 aa).

The N-terminal 54 residues, 1–54 (MAIRKIIRDLLITKQPLLRQLFHQRVLRANARSEFLPAIGYTSHRRFSVFTEFS), are a transit peptide targeting the mitochondrion. Positions 68–88 (ERTVKELKERTEEFKGVTEDL) form a coiled coil. The span at 132–143 (VKESFKLGKEEN) shows a compositional bias: basic and acidic residues. The tract at residues 132 to 165 (VKESFKLGKEENAESASSSGTRASQGEKQQSGST) is disordered. The span at 145–165 (ESASSSGTRASQGEKQQSGST) shows a compositional bias: polar residues.

Belongs to the Tim44 family. In terms of assembly, probable component of the PAM complex at least composed of a mitochondrial HSP70 protein, TIMM44 and TIMM14. The complex interacts with the TIMM23 component of the TIM17:23 complex. Expressed in roots, flowers, young cotyledons and leaves.

It is found in the mitochondrion inner membrane. Essential component of the PAM complex, a complex required for the translocation of transit peptide-containing proteins from the inner membrane into the mitochondrial matrix in an ATP-dependent manner. Recruits mitochondrial HSP70 to drive protein translocation into the matrix using ATP as an energy source. This chain is Mitochondrial import inner membrane translocase subunit TIM44-1 (TIM44-1), found in Arabidopsis thaliana (Mouse-ear cress).